The primary structure comprises 103 residues: c-Myc-binding protein (103 aa).

This sequence belongs to the AMY1 family. As to quaternary structure, binds via its C-terminal region to the N-terminal region of MYC. Associates with AKAP1/S-AKAP84. Interacts with MYCBPAP. Interacts with CFAP91.

The protein resides in the cytoplasm. Its subcellular location is the nucleus. In terms of biological role, may control the transcriptional activity of MYC. Stimulates the activation of E box-dependent transcription by MYC. This Bos taurus (Bovine) protein is c-Myc-binding protein (MYCBP).